Here is a 119-residue protein sequence, read N- to C-terminus: MARVKRGVTSHAKHKKVFKAAKGFYGRRKNTIRAAKSAVERSMQYNYRDRKVKKRTFRALWIQRINAGVRELGMTYGRFIDGLGKAGIEVDRKVLSDIAVHEPETLKALVEKAQAALAA.

Belongs to the bacterial ribosomal protein bL20 family.

Functionally, binds directly to 23S ribosomal RNA and is necessary for the in vitro assembly process of the 50S ribosomal subunit. It is not involved in the protein synthesizing functions of that subunit. This Azorhizobium caulinodans (strain ATCC 43989 / DSM 5975 / JCM 20966 / LMG 6465 / NBRC 14845 / NCIMB 13405 / ORS 571) protein is Large ribosomal subunit protein bL20.